The primary structure comprises 82 residues: MGFYMLLTVALLLTSLMNVEATPVDQAERSALEKSGLGNRIQPRYDNCGDAEADCYQSKCMDGETYDEECEASCNYVVANCI.

The first 21 residues, 1–21, serve as a signal peptide directing secretion; sequence MGFYMLLTVALLLTSLMNVEA. A propeptide spanning residues 22 to 39 is cleaved from the precursor; it reads TPVDQAERSALEKSGLGN. Intrachain disulfides connect Cys48–Cys70, Cys55–Cys74, and Cys60–Cys81.

In terms of tissue distribution, expressed by the venom duct.

It is found in the secreted. The polypeptide is Turripeptide IX-04 (Gemmula speciosa (Splendid gem-turris)).